Consider the following 370-residue polypeptide: uncharacterized protein (370 aa).

Residues Asp152, His154, Asp184, Asn215, His306, and His308 each contribute to the a divalent metal cation site.

The protein belongs to the metallophosphoesterase superfamily. It depends on a divalent metal cation as a cofactor.

This is an uncharacterized protein from Helicobacter pylori (strain ATCC 700392 / 26695) (Campylobacter pylori).